The following is a 128-amino-acid chain: Orchestin (128 aa).

Residues 1–20 form the signal peptide; it reads MNKVFIIGVCLFIVSQAVLA. The interval 23–95 is disordered; the sequence is WDSDESSDER…DEDSDDSQES (73 aa). Basic and acidic residues-rich tracts occupy residues 30 to 49 and 56 to 81; these read DERLSDRSDESREEPRKLVV and EDSNESAEVRRRDDSRESEEEPRKLS. Over residues 84-93 the composition is skewed to acidic residues; it reads TSDEDSDDSQ.

In terms of processing, phosphorylated on Ser and Tyr residues. Calcium-binding activity is dependent on serine phosphorylation but not on tyrosine phosphorylation. Posterior caeca epithelium of the gut.

The protein localises to the secreted. Plays a role in cuticle calcification. May induce precipitation of the calcium stored in the posterior caeca as calcium carbonate. The sequence is that of Orchestin from Cryptorchestia cavimana (Amphipod).